The primary structure comprises 291 residues: Shikimate dehydrogenase (NADP(+)) (291 aa).

Residues Ser-26–Ser-28 and Ser-73 each bind shikimate. Residue Lys-77 is the Proton acceptor of the active site. Asn-98 and Asp-113 together coordinate shikimate. NADP(+) is bound by residues Gly-137–Ala-141 and Val-238. Tyr-240 is a binding site for shikimate. Gly-261 contacts NADP(+).

It belongs to the shikimate dehydrogenase family. As to quaternary structure, homodimer.

The catalysed reaction is shikimate + NADP(+) = 3-dehydroshikimate + NADPH + H(+). It participates in metabolic intermediate biosynthesis; chorismate biosynthesis; chorismate from D-erythrose 4-phosphate and phosphoenolpyruvate: step 4/7. Functionally, involved in the biosynthesis of the chorismate, which leads to the biosynthesis of aromatic amino acids. Catalyzes the reversible NADPH linked reduction of 3-dehydroshikimate (DHSA) to yield shikimate (SA). The polypeptide is Shikimate dehydrogenase (NADP(+)) (Listeria monocytogenes serotype 4b (strain F2365)).